The sequence spans 742 residues: Hapless 2 (742 aa).

A signal peptide spans 1–19 (MKFLAFGLIYFHFCILNRC). The Extracellular segment spans residues 20–540 (EYITSSTIQK…CYFSAGCIKE (521 aa)). Intrachain disulfides connect cysteine 30–cysteine 40, cysteine 118–cysteine 147, cysteine 129–cysteine 182, cysteine 148–cysteine 312, cysteine 150–cysteine 168, cysteine 295–cysteine 319, and cysteine 431–cysteine 470. An important for membrane fusion region spans residues 152–179 (LSDILGMGNDLSRGKVCYALNLGAGSAT). The helical transmembrane segment at 541-561 (AFKSIASIAGVASALALVIFL) threads the bilayer. The Cytoplasmic segment spans residues 562 to 742 (AKNGYLVPII…STSPLYLLIE (181 aa)).

It belongs to the HAP2/GCS1 family.

It localises to the cell membrane. The protein resides in the cell junction. In terms of biological role, during fertilization, required for the formation of intercellular membrane pores and subsequent exchange of gametic pronuclei between cells. Probably initiates the formation of intercellular membrane pores by inserting part of its extracellular domain into the cell membrane of the adjoining cell in the mating pair. Mating requires the presence of HAP2 on at least one of the two cells. Mating efficiency is high when HAP2 is present on both cells, and is strongly reduced when HAP2 is present on only one of the two cells. The protein is Hapless 2 of Tetrahymena thermophila.